The following is a 476-amino-acid chain: Tryptophan--tRNA ligase, cytoplasmic (476 aa).

The interval 1 to 117 is dispensable to the catalytic activity; sequence MADMSNGEQG…LIVRFGSSKI (117 aa). The WHEP-TRS domain maps to 13–69; that stretch reads SPLELFHSIAAQGELVRDLKARNAAKDEIDSAVKMLLSLKTSYKAATGEDYKVDCPP. The disordered stretch occupies residues 63-83; sequence YKVDCPPGDPAPESGEGLDAT. An N6-succinyllysine modification is found at K159. The 'HIGH' region signature appears at 169-178; it reads PSSEAMHVGH. Residues 354-358 carry the 'KMSKS' region motif; it reads KMSAS. The residue at position 356 (S356) is a Phosphoserine.

Belongs to the class-I aminoacyl-tRNA synthetase family. In terms of assembly, homodimer. Interacts with oxidized form of GAPDH. Post-translationally, proteolytic cleavage generates 2 forms; T1-TrpRS and T2-TrpRS.

The protein localises to the cytoplasm. The catalysed reaction is tRNA(Trp) + L-tryptophan + ATP = L-tryptophyl-tRNA(Trp) + AMP + diphosphate + H(+). Its function is as follows. T1-TrpRS has aminoacylation activity while T2-TrpRS lacks it. T1-TrpRS and T2-TrpRS possess angiostatic activity. T2-TrpRS inhibits fluid shear stress-activated responses of endothelial cells. Regulates ERK, Akt, and eNOS activation pathways that are associated with angiogenesis, cytoskeletal reorganization and shear stress-responsive gene expression. The sequence is that of Tryptophan--tRNA ligase, cytoplasmic (WARS1) from Bos taurus (Bovine).